The following is a 143-amino-acid chain: Ribosome-binding factor A (143 aa).

Positions 119–129 (AVGDKPAVPRD) are enriched in basic and acidic residues. Residues 119–143 (AVGDKPAVPRDDNDDPVSDNPERDA) form a disordered region.

This sequence belongs to the RbfA family. Monomer. Binds 30S ribosomal subunits, but not 50S ribosomal subunits or 70S ribosomes.

The protein resides in the cytoplasm. Functionally, one of several proteins that assist in the late maturation steps of the functional core of the 30S ribosomal subunit. Associates with free 30S ribosomal subunits (but not with 30S subunits that are part of 70S ribosomes or polysomes). Required for efficient processing of 16S rRNA. May interact with the 5'-terminal helix region of 16S rRNA. The chain is Ribosome-binding factor A from Marinobacter nauticus (strain ATCC 700491 / DSM 11845 / VT8) (Marinobacter aquaeolei).